The sequence spans 1349 residues: Patatin-like phospholipase domain-containing protein 7 (1349 aa).

The Lumenal portion of the chain corresponds to Met1–Leu36. The chain crosses the membrane as a helical span at residues Met37 to Val57. Residues Tyr58–Ser1349 lie on the Cytoplasmic side of the membrane. Residue Val170–Arg297 coordinates a nucleoside 3',5'-cyclic phosphate. The disordered stretch occupies residues Met340–Asp361. A phosphoserine mark is found at Ser341 and Ser377. Residues Phe496 to Arg599 and Ala610 to Lys715 contribute to the a nucleoside 3',5'-cyclic phosphate site. The segment at Val678–Arg964 is involved in the binding to lipid droplets. The PNPLA domain maps to Leu947–Arg1113. The short motif at Gly951–Gly956 is the GXGXXG element. The GXSXG signature appears at Gly978–Gly982. The active-site Nucleophile is the Ser980. Catalysis depends on Asp1100, which acts as the Proton acceptor. A DGA/G motif is present at residues Asp1100 to Gly1102. Phosphoserine is present on Ser1277. Thr1281 carries the phosphothreonine modification. Residues Asp1297–Ser1349 form a disordered region. Polar residues predominate over residues Ser1314–Ser1331.

Belongs to the NTE family. Expressed in the brain, liver, kidney, lung and testis.

It is found in the endoplasmic reticulum membrane. Its subcellular location is the lipid droplet. The enzyme catalyses a 1-acyl-sn-glycero-3-phosphocholine + H2O = sn-glycerol 3-phosphocholine + a fatty acid + H(+). It carries out the reaction 1-(9Z-octadecenoyl)-sn-glycero-3-phosphocholine + H2O = sn-glycerol 3-phosphocholine + (9Z)-octadecenoate + H(+). The catalysed reaction is 1-(9Z-octadecenoyl)-sn-glycero-3-phosphoethanolamine + H2O = sn-glycero-3-phosphoethanolamine + (9Z)-octadecenoate + H(+). It catalyses the reaction 1-(9Z-octadecenoyl)-sn-glycero-3-phospho-L-serine + H2O = sn-glycero-3-phospho-L-serine + (9Z)-octadecenoate + H(+). The enzyme catalyses 1-hexadecanoyl-sn-glycero-3-phosphocholine + H2O = sn-glycerol 3-phosphocholine + hexadecanoate + H(+). It carries out the reaction 1-hexadecanoyl-sn-glycero-3-phosphate + H2O = sn-glycerol 3-phosphate + hexadecanoate + H(+). Functionally, lysophospholipase which preferentially deacylates unsaturated lysophosphatidylcholine (C18:1), generating glycerophosphocholine. Also can deacylate, to a lesser extent, lysophosphatidylethanolamine (C18:1), lysophosphatidyl-L-serine (C18:1) and lysophosphatidic acid (C16:0). This Rattus norvegicus (Rat) protein is Patatin-like phospholipase domain-containing protein 7 (Pnpla7).